The chain runs to 29 residues: Beta-hexatoxin-Mr1a (29 aa).

Disulfide bonds link Cys2–Cys16, Cys9–Cys21, and Cys15–Cys26.

This sequence belongs to the neurotoxin 15 family. 01 (magi-5) subfamily. As to expression, expressed by the venom gland.

It localises to the secreted. Functionally, insect and vertebrate active toxin. Binds at site 4 of mammalian voltage-gated sodium channels and shifts the activation voltage of the mammalian rNav1.2a (SCN2A) channel to more hyperpolarized voltages, whereas the insect channel, DmNav1 (para), is not affected. Causes temporary paralysis when injected into lepidopteran larvae at 8.6 nmol/g. A low intracranial injection dose into mice causes lacrimation, closure of the eyes and sweating. A high injection dose causes extensive lacrimation and death. The chain is Beta-hexatoxin-Mr1a from Macrothele raveni (Funnel-web spider).